A 187-amino-acid polypeptide reads, in one-letter code: MAIISSLANHLLIAMPSLKDPNFERSVVYLCEHNEQGSVGLIINRPLQFPLSIVFEQLQIEPIRVEKNGLPLLFGGPVQPERGFVIHKQMGGWRSSLFLQDEVTVTTSNDIIRAIAYDEGPKDVLITLGYAAWTEQQLEREIMSNTWLVCPYKSEILYEVPFEERWEYAGLTLGIKMNQLSSDAGHA.

This sequence belongs to the UPF0301 (AlgH) family.

The protein is UPF0301 protein LPC_2717 of Legionella pneumophila (strain Corby).